The sequence spans 340 residues: Major histocompatibility complex class I-related gene protein (340 aa).

The signal sequence occupies residues 1–22 (MGELMAFLLPLIIVLMVKHSNS). The alpha-1 stretch occupies residues 23–109 (RTHSLRYFRL…KRLQRHYNHS (87 aa)). Residues 23-201 (RTHSLRYFRL…EYGKDTLQRT (179 aa)) are antigen-binding cleft. Residues 23–302 (RTHSLRYFRL…QESEAIPLVM (280 aa)) lie on the Extracellular side of the membrane. 8-(9H-purin-6-yl)-2-oxa-8-azabicyclo[3.3.1]nona-3,6-diene-4,6-dicarbaldehyde contacts are provided by tyrosine 29 and arginine 31. 5-(2-oxoethylideneamino)-6-(D-ribitylamino)uracil-binding residues include arginine 31, serine 46, and lysine 65. Residues arginine 31, serine 46, and lysine 65 each contribute to the 5-(2-oxopropylideneamino)-6-(D-ribitylamino)uracil site. 7-hydroxy-6-methyl-8-(1-D-ribityl)lumazine is bound by residues arginine 31, serine 46, and lysine 65. 8-(9H-purin-6-yl)-2-oxa-8-azabicyclo[3.3.1]nona-3,6-diene-4,6-dicarbaldehyde is bound by residues lysine 65 and histidine 80. Residue lysine 65 coordinates 2-amino-4-oxopteridine-6-carbaldehyde. Lysine 65 lines the pyridoxal pocket. The N-linked (GlcNAc...) asparagine glycan is linked to asparagine 107. An alpha-2 region spans residues 110–201 (GSHTYQRMIG…EYGKDTLQRT (92 aa)). Residue arginine 116 participates in 8-(9H-purin-6-yl)-2-oxa-8-azabicyclo[3.3.1]nona-3,6-diene-4,6-dicarbaldehyde binding. Arginine 116, tyrosine 174, and glutamine 175 together coordinate 5-(2-oxoethylideneamino)-6-(D-ribitylamino)uracil. Residues arginine 116, tyrosine 174, and glutamine 175 each contribute to the 5-(2-oxopropylideneamino)-6-(D-ribitylamino)uracil site. The 7-hydroxy-6-methyl-8-(1-D-ribityl)lumazine site is built by arginine 116, tyrosine 174, and glutamine 175. Intrachain disulfides connect cysteine 120-cysteine 183 and cysteine 222-cysteine 278. Positions 202 to 293 (EPPLVRVNRK…GVHMVLQVPQ (92 aa)) are alpha-3. One can recognise an Ig-like C1-type domain in the interval 203–282 (PPLVRVNRKE…SNLYSCHVEH (80 aa)). The tract at residues 294–302 (ESEAIPLVM) is connecting peptide. A helical membrane pass occupies residues 303–323 (KAVSGSIVFVIVLTGVGVLVW). The Cytoplasmic segment spans residues 324–340 (RRRPREQNGAVYLPTPD).

It belongs to the MHC class I family. As to quaternary structure, heterotrimer that consists of MR1, B2M and metabolite antigen. Major classes of metabolite ligands presented by MR1 include riboflavin-related antigens, pyrimidines and ribityl lumazines, nucleobase adducts and folate derivatives. Forms reversible covalent Schiff base complexes with microbial pyrimidine-based metabolite, which serves as a molecular switch triggering complete folding, stable association with B2M and translocation of the ternary complex from endoplasmic reticulum to the plasma membrane. Alternatively, forms non-Schiff base complexes with ribityl lumazines. On antigen-presenting cells, the ternary complex interacts with TCR on MR1-restricted T cells. Interacts with TAPBP and TAPBPL chaperones in the endoplasmic reticulum. TAPBP associated or not with MHC class I peptide loading complex binds ligand-free MR1 or MR1-B2M complex, providing for stable MR1 pools ready for metabolite antigen processing. TAPBPL interacts with MR1 in a ligand-independent way; this interaction may stabilize MR1 pool and facilitate ligand loading and dissociation. Structurally, MR1-B2M heterodimer adopts a topology similar to classical MHC class I molecules, with alpha-1 and alpha-2 domains of MR1 forming the antigen-binding cleft composed of two alpha-helices resting on a floor of 7-stranded anti-parallel beta-pleated sheet. MR1-B2M heterodimer (via alpha-helices) interacts with TCR (via CDR domains). In terms of processing, N-glycosylated.

It is found in the cell membrane. It localises to the endoplasmic reticulum membrane. Its subcellular location is the golgi apparatus membrane. The protein resides in the early endosome membrane. The protein localises to the late endosome membrane. Antigen-presenting molecule specialized in displaying microbial pyrimidine-based metabolites to alpha-beta T cell receptors (TCR) on innate-type mucosal-associated invariant T (MAIT) cells. In complex with B2M preferentially presents riboflavin-derived metabolites to semi-invariant TCRs on MAIT cells, guiding immune surveillance of the microbial metabolome at mucosal epithelial barriers. Signature pyrimidine-based microbial antigens are generated via non-enzymatic condensation of metabolite intermediates of the riboflavin pathway with by-products arising from other metabolic pathways such as glycolysis. Typical potent antigenic metabolites are 5-(2-oxoethylideneamino)-6-D-ribitylaminouracil (5-OE-RU) and 5-(2-oxopropylideneamino)-6-D-ribitylaminouracil (5-OP-RU), products of condensation of 5-amino-6-D-ribityaminouracil (5-A-RU) with glyoxal or methylglyoxal by-products, respectively. May present microbial antigens to various MAIT cell subsets, providing for unique recognition of diverse microbes, including pathogens that do not synthesize riboflavin. Upon antigen recognition, elicits rapid innate-type MAIT cell activation to eliminate pathogenic microbes by directly killing infected cells. During T cell development, drives thymic selection and post-thymic terminal differentiation of MAIT cells in a process dependent on commensal microflora. Acts as an immune sensor of cancer cell metabolome. May present a tumor-specific or -associated metabolite essential for cancer cell survival to a pan-cancer TCR on a non-MAIT CD8-positive T cell clone, triggering T cell-mediated killing of a wide range of cancer cell types. May present tumor-enriched pyridoxal and pyridoxal 5'-phosphate antigens, enabling preferential recognition of cancer cells. Presents nucleobase carbonyl adducts generated during oxidative stress. Captures M3Ade, a nucleobase adduct composed of one adenine modified by a malondialdehyde trimer, for recognition by MR1-restricted T cell clones expressing a polyclonal TCR repertoire. This Pongo pygmaeus (Bornean orangutan) protein is Major histocompatibility complex class I-related gene protein.